Here is a 378-residue protein sequence, read N- to C-terminus: Putative zinc finger protein 302L (378 aa).

The C2H2-type; degenerate zinc finger occupies 3-25; sequence IVCEFCDKSFDSKSKVNAHQRTK.

The protein belongs to the IIV-6 302L family.

The polypeptide is Putative zinc finger protein 302L (Invertebrate iridescent virus 6 (IIV-6)).